A 583-amino-acid chain; its full sequence is Ribonuclease ZC3H12A (583 aa).

A compositionally biased stretch (basic and acidic residues) spans 1-11 (MSLWELEDRRS). 2 disordered regions span residues 1-29 (MSLWELEDRRSCQGTPRPAQEPTAEEATT) and 73-119 (GSAA…GSDL). Positions 15 to 29 (TPRPAQEPTAEEATT) are enriched in low complexity. Residues 26–71 (EATTAELQMKVDFFRKLGYSSAEIHSVLQKLGIQADTNTVLGELVK) form a ubiquitin association domain region. Positions 65–134 (VLGELVKHGS…DGSNVAMSHG (70 aa)) are necessary for interaction with TANK. Basic and acidic residues predominate over residues 73–82 (GSAAERERQA). Ser83 bears the Phosphoserine mark. Residues 96–281 (GGGTPKAPTV…LDNFLRKKPL (186 aa)) are RNase. Positions 119–274 (LRPIVIDGSN…LGRHGPSLDN (156 aa)) constitute an RNase NYN domain. The interval 198-204 (RRVGGKR) is RNA binding. Position 210 (Asp210) interacts with Mg(2+). 2 disordered regions span residues 262–290 (DDPLGRHGPSLDNFLRKKPLTSEHKKQPC) and 323–404 (ANAL…PSEW). A C3H1-type zinc finger spans residues 284–309 (EHKKQPCPYGRKCTYGIKCRFLHPER). A necessary for interaction with ZC3H12D region spans residues 285–441 (HKKQPCPYGR…SELWGVRGGG (157 aa)). Over residues 341 to 352 (RPSPSSQPGSLP) the composition is skewed to low complexity. The span at 353–364 (TEHEQCSPDRKK) shows a compositional bias: basic and acidic residues. Over residues 384–393 (PTGRSLPPSG) the composition is skewed to low complexity. 2 positions are modified to phosphoserine: Ser422 and Ser426. Positions 503–530 (YQLPPPTQRLQEPQAPGPGADRGPWGGA) are disordered.

It belongs to the ZC3H12 family. In terms of assembly, oligomer. Found in a deubiquitination complex with TANK, USP10 and ZC3H12A; this complex inhibits genotoxic stress- or interleukin-1-beta-mediated NF-kappaB activation by promoting IKBKG or TRAF6 deubiquitination. Interacts with IKBKG; this interaction increases in response to DNA damage. Interacts with TANK; this interaction increases in response to DNA damage and serves as a bridge to anchor both TANK and USP10 into a deubiquitinating complex. Interacts with TRAF6; this interaction increases in response to DNA damage and is stimulated by TANK. Interacts with USP10; this interaction increases in response to DNA damage and serves as a bridge to anchor both TANK and USP10 into a deubiquitinating complex. Interacts with ZC3H12D. Interacts with TNRC6A. Interacts with IKBKB/IKKB. Interacts with IKBKB/IKKB. Interacts with BTRC; the interaction occurs when ZC3H12A is phosphorylated in a IKBKB/IKKB-dependent manner. Interacts with IRAK1; this interaction increases the interaction between ZC3H12A and IKBKB/IKKB. Interacts with UPF1; this interaction occurs in a mRNA translationally active- and termination-dependent manner and is essential for ZC3H12A-mediated degradation of target mRNAs. Associates with ribosomes. Interacts with ubiquitin. The cofactor is Mg(2+). In terms of processing, phosphorylated by IRAK1; phosphorylation is necessary for subsequent phosphorylation by the I-kappa-B-kinase (IKK) complex. Phosphorylated by I-kappa-B-kinase (IKK) subunits IKBKB/IKKB and CHUK/IKKA at Ser-422 and Ser-426; these phosphorylations promote ubiquitin proteasome-mediated degradation of ZC3H12A and hence facilitates rapid and robust production of IL-6 mRNA in response to toll-like receptor (TLR) or IL-1 receptor stimuli. Ubiquitinated; ubiquitination is induced in response to interleukin IL1 receptor stimuli in a IKBKB/IKKB and IRAK1-dependent manner, leading to proteasome-mediated degradation. Post-translationally, proteolytically cleaved between Arg-95 and Arg-198 by MALT1 in activated T-cells; cleavage at Arg-95 is critical for promoting ZC3H12A degradation in response to T-cell receptor (TCR) stimulation, and hence is necessary for prolonging the stability of a set of mRNAs controlling T-cell activation and Th17 cell differentiation.

It is found in the nucleus. The protein localises to the cytoplasm. It localises to the P-body. Its subcellular location is the rough endoplasmic reticulum membrane. The protein resides in the cytoplasmic granule. Functionally, endoribonuclease involved in various biological functions such as cellular inflammatory response and immune homeostasis, glial differentiation of neuroprogenitor cells, cell death of cardiomyocytes, adipogenesis and angiogenesis. Functions as an endoribonuclease involved in mRNA decay. Modulates the inflammatory response by promoting the degradation of a set of translationally active cytokine-induced inflammation-related mRNAs, such as IL6 and IL12B, during the early phase of inflammation. Prevents aberrant T-cell-mediated immune reaction by degradation of multiple mRNAs controlling T-cell activation, such as those encoding cytokines (IL6 and IL2), cell surface receptors (ICOS, TNFRSF4 and TNFR2) and transcription factor (REL). Inhibits cooperatively with ZC3H12A the differentiation of helper T cells Th17 in lungs. They repress target mRNA encoding the Th17 cell-promoting factors IL6, ICOS, REL, IRF4, NFKBID and NFKBIZ. The cooperation requires RNA-binding by RC3H1 and the nuclease activity of ZC3H12A. Together with RC3H1, destabilizes TNFRSF4/OX40 mRNA by binding to the conserved stem loop structure in its 3'UTR. Self regulates by destabilizing its own mRNA. Cleaves mRNA harboring a stem-loop (SL), often located in their 3'-UTRs, during the early phase of inflammation in a helicase UPF1-dependent manner. Plays a role in the inhibition of microRNAs (miRNAs) biogenesis. Cleaves the terminal loop of a set of precursor miRNAs (pre-miRNAs) important for the regulation of the inflammatory response leading to their degradation, and thus preventing the biosynthesis of mature miRNAs. Also plays a role in promoting angiogenesis in response to inflammatory cytokines by inhibiting the production of antiangiogenic microRNAs via its anti-dicer RNase activity. Affects the overall ubiquitination of cellular proteins. Positively regulates deubiquitinase activity promoting the cleavage at 'Lys-48'- and 'Lys-63'-linked polyubiquitin chains on TNF receptor-associated factors (TRAFs), preventing JNK and NF-kappa-B signaling pathway activation, and hence negatively regulating macrophage-mediated inflammatory response and immune homeostasis. Also induces deubiquitination of the transcription factor HIF1A, probably leading to its stabilization and nuclear import, thereby positively regulating the expression of proangiogenic HIF1A-targeted genes. Involved in a TANK-dependent negative feedback response to attenuate NF-kappaB activation through the deubiquitination of IKBKG or TRAF6 in response to interleukin-1-beta (IL1B) stimulation or upon DNA damage. Prevents stress granules (SGs) formation and promotes macrophage apoptosis under stress conditions, including arsenite-induced oxidative stress, heat shock, and energy deprivation. Plays a role in the regulation of macrophage polarization; promotes IL4-induced polarization of macrophages M1 into anti-inflammatory M2 state. May also act as a transcription factor that regulates the expression of multiple genes involved in inflammatory response, angiogenesis, adipogenesis and apoptosis. Functions as a positive regulator of glial differentiation of neuroprogenitor cells through an amyloid precursor protein (APP)-dependent signaling pathway. Attenuates septic myocardial contractile dysfunction in response to lipopolysaccharide (LPS) by reducing I-kappa-B-kinase (IKK)-mediated NF-kappa-B activation, and hence myocardial pro-inflammatory cytokine production. The protein is Ribonuclease ZC3H12A of Bos taurus (Bovine).